Here is a 512-residue protein sequence, read N- to C-terminus: Multidrug resistance protein 3 (512 aa).

The next 14 membrane-spanning stretches (helical) occupy residues 13–33 (FVVLGLLLGILMSAMDNTIVA), 48–68 (KFAWVTASYMVAVMAGMPIYG), 79–99 (FFLFGLIFFLIGSALCGIAQT), 109–129 (IQGIGGGALLPIAFTIIFDLF), 139–159 (GMFGAVFGLSSVLGPLLGAII), 163–183 (ISWHWVFYINVPIGALSLFFI), 200–220 (WGGAITLVVSIVCLMFALELG), 228–248 (SIQIIGLFIVFAVFFIAFFIV), 272–292 (ILAFLYGGTFIILAVFIPIFV), 304–324 (GFILTPMMIGSVIGSMIGGIF), 333–353 (LMLISVIAFFIGMLLLSNMTP), 358–378 (VWLTVFMMISGFGVGFNFSLL), 399–421 (SFLRSFGMTLGVTIFGTVQTNVF), and 475–495 (ITYVFLLALIPIVLAAVTILF).

Belongs to the major facilitator superfamily. EmrB family.

It localises to the cell membrane. Functionally, confers resistance to puromycin, tosufloxacin and norfloxacin. This chain is Multidrug resistance protein 3 (bmr3), found in Bacillus subtilis (strain 168).